The sequence spans 418 residues: Lactosylceramide alpha-2,3-sialyltransferase (418 aa).

The tract at residues 1 to 25 (MRTKAAGCAERRPLQPRTEAAAAPA) is disordered. The Cytoplasmic segment spans residues 1 to 61 (MRTKAAGCAE…RAQSKMRRPS (61 aa)). A helical; Signal-anchor for type II membrane protein transmembrane segment spans residues 62-82 (LLLKDILKCTLLVFGVWILYI). Over 83–418 (LKLNYTTEEC…DLSGGIDREF (336 aa)) the chain is Lumenal. N-linked (GlcNAc...) asparagine glycans are attached at residues Asn-86, Asn-236, and Asn-390. The cysteines at positions 195 and 353 are disulfide-linked.

The protein belongs to the glycosyltransferase 29 family. In terms of processing, N-glycosylated. As to expression, ubiquitous. High expression in brain, skeletal muscle, placenta, and testis. mRNA widely distributed in human brain, but slightly elevated expression was observed in the cerebral cortex, temporal lobe, and putamen.

The protein resides in the golgi apparatus membrane. The enzyme catalyses a beta-D-Gal-(1-&gt;4)-beta-D-Glc-(1&lt;-&gt;1)-Cer(d18:1(4E)) + CMP-N-acetyl-beta-neuraminate = a ganglioside GM3 (d18:1(4E)) + CMP + H(+). It catalyses the reaction ganglioside GA2 (d18:1(4E)/18:0) + CMP-N-acetyl-beta-neuraminate = ganglioside GM2 (d18:1(4E)/18:0) + CMP + H(+). The catalysed reaction is a beta-D-Gal-(1&lt;-&gt;1')-ceramide + CMP-N-acetyl-beta-neuraminate = N-acetyl-alpha-neuraminosyl-(2-&gt;3)-beta-D-galactosyl-(1&lt;-&gt;1')-ceramide + CMP + H(+). It carries out the reaction a beta-D-galactosyl-(1&lt;-&gt;1')-N-acylsphing-4-enine + CMP-N-acetyl-beta-neuraminate = a ganglioside GM4 (d18:1(4E)) + CMP + H(+). The enzyme catalyses ganglioside GA1 (d18:1(4E)/18:0) + CMP-N-acetyl-beta-neuraminate = ganglioside GM1 (d18:1(4E)/18:0) + CMP + H(+). Its pathway is glycolipid biosynthesis. Transfers the sialyl group (N-acetyl-alpha-neuraminyl or NeuAc) from CMP-NeuAc to the non-reducing terminal galactose (Gal) of glycosphingolipids forming gangliosides (important molecules involved in the regulation of multiple cellular processes, including cell proliferation and differentiation, apoptosis, embryogenesis, development, and oncogenesis). Mainly involved in the biosynthesis of ganglioside GM3 but can also use different glycolipids as substrate acceptors such as D-galactosylceramide (GalCer), asialo-GM2 (GA2) and asialo-GM1 (GA1), although less preferentially than beta-D-Gal-(1-&gt;4)-beta-D-Glc-(1&lt;-&gt;1)-Cer (LacCer). The sequence is that of Lactosylceramide alpha-2,3-sialyltransferase (ST3GAL5) from Homo sapiens (Human).